The following is a 553-amino-acid chain: MPVQLTTALRVVGTSLFALAVLGGILAAYVTGYQFIHTEKHYLSFGLYGAILGLHLLIQSLFAFLEHRRMRRAGQALKLPSPRRGSVALCIAAYQEDPDYLRKCLRSAQRISFPDLKVVMVVDGNRQEDAYMLDIFHEVLGGTEQAGFFVWRSNFHEAGEGETEASLQEGMDRVRDVVRASTFSCIMQKWGGKREVMYTAFKALGDSVDYIQVCDSDTVLDPACTIEMLRVLEEDPQVGGVGGDVQILNKYDSWISFLSSVRYWMAFNVERACQSYFGCVQCISGPLGMYRNSLLQQFLEDWYHQKFLGSKCSFGDDRHLTNRVLSLGYRTKYTARSKCLTETPTKYLRWLNQQTRWSKSYFREWLYNSLWFHKHHLWMTYESVVTGFFPFFLIATVIQLFYRGRIWNILLFLLTVQLVGIIKATYACFLRGNAEMIFMSLYSLLYMSSLLPAKIFAIATINKSGWGTSGRKTIVVNFIGLIPVSIWVAVLLGGLAYTAYCQDLFSETELAFLVSGAILYGCYWVALLMLYLAIIARRCGKKPEQYSLAFAEV.

Over 1–15 the chain is Cytoplasmic; that stretch reads MPVQLTTALRVVGTS. Residues 16–36 traverse the membrane as a helical segment; the sequence is LFALAVLGGILAAYVTGYQFI. Topologically, residues 37 to 44 are extracellular; sequence HTEKHYLS. A helical membrane pass occupies residues 45 to 65; the sequence is FGLYGAILGLHLLIQSLFAFL. Topologically, residues 66-377 are cytoplasmic; the sequence is EHRRMRRAGQ…NSLWFHKHHL (312 aa). The helical transmembrane segment at 378-398 threads the bilayer; it reads WMTYESVVTGFFPFFLIATVI. Topologically, residues 399–408 are extracellular; the sequence is QLFYRGRIWN. Residues 409-429 form a helical membrane-spanning segment; it reads ILLFLLTVQLVGIIKATYACF. Over 430–440 the chain is Cytoplasmic; it reads LRGNAEMIFMS. The chain crosses the membrane as a helical span at residues 441–461; that stretch reads LYSLLYMSSLLPAKIFAIATI. Asparagine 462 carries N-linked (GlcNAc...) asparagine glycosylation. Residues 462–473 are Extracellular-facing; sequence NKSGWGTSGRKT. A helical membrane pass occupies residues 474–494; it reads IVVNFIGLIPVSIWVAVLLGG. At 495–515 the chain is on the cytoplasmic side; it reads LAYTAYCQDLFSETELAFLVS. A helical transmembrane segment spans residues 516–536; it reads GAILYGCYWVALLMLYLAIIA. Topologically, residues 537 to 553 are extracellular; sequence RRCGKKPEQYSLAFAEV.

The protein belongs to the NodC/HAS family. Homodimers. Forms heterodimers with HAS2 and HAS1. The cofactor is Mg(2+). Post-translationally, O-GlcNAcylation increases the hyaluronan synthase activity, HAS3 stability and its plasma membrane residence. The concentration of UDP-GlcNAc controls the level of O-GlcNAc modification.

It localises to the cell membrane. Its subcellular location is the golgi apparatus membrane. The protein localises to the golgi apparatus. The protein resides in the trans-Golgi network membrane. It is found in the early endosome. The catalysed reaction is [hyaluronan](n) + UDP-N-acetyl-alpha-D-glucosamine = N-acetyl-beta-D-glucosaminyl-(1-&gt;4)-[hyaluronan](n) + UDP + H(+). It carries out the reaction N-acetyl-beta-D-glucosaminyl-(1-&gt;4)-[hyaluronan](n) + UDP-alpha-D-glucuronate = [hyaluronan](n+1) + UDP + H(+). It functions in the pathway glycan biosynthesis; hyaluronan biosynthesis. Its activity is regulated as follows. The enzymatic activity depends on the availability of cytosolic levels of UDP-GlcUA and UDP-GlcNAc. Its function is as follows. Catalyzes the addition of GlcNAc or GlcUA monosaccharides to the nascent hyaluronan polymer. Therefore, it is essential to hyaluronan synthesis a major component of most extracellular matrices that has a structural role in tissues architectures and regulates cell adhesion, migration and differentiation. This is one of three isoenzymes responsible for cellular hyaluronan synthesis. This is Hyaluronan synthase 3 from Homo sapiens (Human).